The sequence spans 68 residues: Probable Sec-independent protein translocase protein TatE (68 aa).

A helical membrane pass occupies residues 1–21; that stretch reads MGEISITKLLVVAALIILVFG. The tract at residues 43–68 is disordered; sequence MNEDDDSAKKTTAEEEAPAQKLSHKE.

It belongs to the TatA/E family. TatE subfamily.

It localises to the cell inner membrane. Part of the twin-arginine translocation (Tat) system that transports large folded proteins containing a characteristic twin-arginine motif in their signal peptide across membranes. TatE shares overlapping functions with TatA. This Klebsiella pneumoniae subsp. pneumoniae (strain ATCC 700721 / MGH 78578) protein is Probable Sec-independent protein translocase protein TatE.